The sequence spans 380 residues: Alcohol dehydrogenase 3 (380 aa).

Zn(2+)-binding residues include Cys-48, Thr-50, His-70, Cys-100, Cys-103, Cys-106, Cys-114, and Cys-178. Residues Thr-50 and His-70 each contribute to the an alcohol site. Thr-50 is a binding site for NAD(+). NAD(+)-binding positions include 203–208, Asp-227, Arg-232, Thr-273, Val-296, 296–298, Phe-323, and Arg-373; these read GLGAVG and VGV.

Belongs to the zinc-containing alcohol dehydrogenase family. Homodimer. Homotetramer. Requires Zn(2+) as cofactor.

The protein localises to the cytoplasm. It carries out the reaction a primary alcohol + NAD(+) = an aldehyde + NADH + H(+). The catalysed reaction is a secondary alcohol + NAD(+) = a ketone + NADH + H(+). The polypeptide is Alcohol dehydrogenase 3 (ADH3) (Solanum tuberosum (Potato)).